Consider the following 597-residue polypeptide: MDHIRNFSIIAHIDHGKSTLADRIIQVCGGLADREMEAQVLDSMDIERERGITIKAQTAALSYRARDGKVYNLNLIDTPGHVDFSYEVSRSLSACEGALLVVDASQGVEAQTVANCYTAIELGVEVVPVLNKIDLPAANPENAIEEIEDVIGIDATDATRCSAKTGLGVEDVLESLIAKVPPPKGDPAAPLQALIIDSWFDNYVGVVMLVRIVNGTLRPKDKIKLMATGAQYPVEHIGVFTPKSRNLETLSAGQVGFIIAGIKELTAAKVGDTVTHATKAAVEPLPGFKEVKPQVFAGLYPVEANQYDALRESLEKLKLNDASLQYEPEVSQALGFGFRCGFLGLLHMEIVQERLEREFDMDLITTAPTVVYEVMMSDGAIIKVENPAKMPEPPRIEEIREPIVTVNLYMPQDYVGSVITLCEQKRGSQINMQYHGRQVQLTYEIPMAEIVLDFFDRLKSVSRGYASMDYEFKEYRAADVVKVDMLINGDKVDALSVIVHRSQSQYRGREVAAKMREIIPRQMYDVAIQATIGAHIIARENIKALRKNVLAKCYGGDISRKKKLLEKQKAGKKRMKQVGSVEIPQEAFLAILRVEDK.

Residues 2–184 (DHIRNFSIIA…SLIAKVPPPK (183 aa)) enclose the tr-type G domain. Residues 14–19 (DHGKST) and 131–134 (NKID) each bind GTP.

The protein belongs to the TRAFAC class translation factor GTPase superfamily. Classic translation factor GTPase family. LepA subfamily.

Its subcellular location is the cell inner membrane. It carries out the reaction GTP + H2O = GDP + phosphate + H(+). Functionally, required for accurate and efficient protein synthesis under certain stress conditions. May act as a fidelity factor of the translation reaction, by catalyzing a one-codon backward translocation of tRNAs on improperly translocated ribosomes. Back-translocation proceeds from a post-translocation (POST) complex to a pre-translocation (PRE) complex, thus giving elongation factor G a second chance to translocate the tRNAs correctly. Binds to ribosomes in a GTP-dependent manner. This is Elongation factor 4 from Burkholderia lata (strain ATCC 17760 / DSM 23089 / LMG 22485 / NCIMB 9086 / R18194 / 383).